The following is a 369-amino-acid chain: MSRLLGGTLERVCKAVLLLCLLHFLVAVILYFDVYAQHLAFFSRFSIRSPAHALYPAASSSTNCSRPNATASSSGLPEVPSARPGPTAPVIPPCPDVPPGLVGRVVIEFTSPMPLERVQRENPGVLLGGRYTPPDCTPAQTVAVIIPFRHREHHLRYWLHYLHPMLRRQRLRYGIYVINQHGEETFNRAKLLNVGFLEALKEDATYDCFIFSDVDLVPMDDRNLYRCGDQPRHFAIAMDKFGFRLPYASYFGGVSGLSKAQFLRINGFPNEYWGWGGEDDDIFNRISLTGMKISRPDVRIGRYRMIKHDRDKHNEPNPQRFSKIQNTKLSMKWDGIGSLRYRVLEVSRQPLFTNITVDIGRPMSWLNQG.

Residues 1–15 lie on the Cytoplasmic side of the membrane; it reads MSRLLGGTLERVCKA. Residues 16 to 36 traverse the membrane as a helical; Signal-anchor for type II membrane protein segment; the sequence is VLLLCLLHFLVAVILYFDVYA. Topologically, residues 37 to 369 are lumenal; it reads QHLAFFSRFS…GRPMSWLNQG (333 aa). Residues 59–75 are compositionally biased toward polar residues; the sequence is SSSTNCSRPNATASSSG. Positions 59-90 are disordered; it reads SSSTNCSRPNATASSSGLPEVPSARPGPTAPV. Residues Asn63 and Asn68 are each glycosylated (N-linked (GlcNAc...) asparagine). A disulfide bridge connects residues Cys94 and Cys136. UDP-alpha-D-galactose contacts are provided by residues 147–151, 186–188, 214–215, and Trp275; these read PFRHR, FNR, and VD. Cysteines 208 and 227 form a disulfide. Asp215 serves as a coordination point for Mn(2+). Residue 277–280 participates in N-acetyl-D-glucosamine binding; it reads GEDD. Mn(2+) is bound at residue His308. 308–310 is a binding site for UDP-alpha-D-galactose; the sequence is HDR. Position 320 (Arg320) interacts with N-acetyl-D-glucosamine. Residue Asn354 is glycosylated (N-linked (GlcNAc...) asparagine).

Belongs to the glycosyltransferase 7 family. Mn(2+) serves as cofactor.

It is found in the golgi apparatus. The protein resides in the golgi stack membrane. The enzyme catalyses D-glucose + UDP-alpha-D-galactose = lactose + UDP + H(+). The catalysed reaction is an N-acetyl-beta-D-glucosaminyl derivative + UDP-alpha-D-galactose = a beta-D-galactosyl-(1-&gt;4)-N-acetyl-beta-D-glucosaminyl derivative + UDP + H(+). It catalyses the reaction N-acetyl-D-glucosamine + UDP-alpha-D-galactose = beta-D-galactosyl-(1-&gt;4)-N-acetyl-D-glucosamine + UDP + H(+). It functions in the pathway protein modification; protein glycosylation. In terms of biological role, responsible for the synthesis of complex-type N-linked oligosaccharides in many glycoproteins as well as the carbohydrate moieties of glycolipids. Can produce lactose. The sequence is that of Beta-1,4-galactosyltransferase 2 (B4GALT2) from Cricetulus griseus (Chinese hamster).